The following is a 351-amino-acid chain: Mannonate dehydratase (351 aa).

Belongs to the mannonate dehydratase family. The cofactor is Fe(2+). Mn(2+) serves as cofactor.

The enzyme catalyses D-mannonate = 2-dehydro-3-deoxy-D-gluconate + H2O. It functions in the pathway carbohydrate metabolism; pentose and glucuronate interconversion. In terms of biological role, catalyzes the dehydration of D-mannonate. In Clostridium acetobutylicum (strain ATCC 824 / DSM 792 / JCM 1419 / IAM 19013 / LMG 5710 / NBRC 13948 / NRRL B-527 / VKM B-1787 / 2291 / W), this protein is Mannonate dehydratase.